The following is a 534-amino-acid chain: Arginine transporter 1 (534 aa).

The next 6 membrane-spanning stretches (helical) occupy residues 35–55, 99–119, 126–146, 154–174, 182–202, and 216–236; these read YVLL…YFGW, SLFT…GYLL, AVAL…AFSG, PAFV…LLIV, ALIM…PLVL, and VCIG…FFFI. N246 carries N-linked (GlcNAc...) asparagine glycosylation. Residues 261 to 302 are disordered; that stretch reads TAQSSPKAVDSPPCDEGASSRGRLAVSHNTERTAPDDEQEKD. The span at 289-302 shows a compositional bias: basic and acidic residues; it reads NTERTAPDDEQEKD. Transmembrane regions (helical) follow at residues 329–349, 365–385, 388–408, 419–439, 451–471, and 483–503; these read AFTF…WVMA, YTLE…GVVI, IGIM…YVCV, FSVI…YVFV, LIGV…VLYG, and RPVV…LLAM.

Belongs to the SLC43A transporter (TC 2.A.1.44) family.

It localises to the cell membrane. The catalysed reaction is L-arginine(in) = L-arginine(out). Its function is as follows. Selective L-arginine transporter that is essential for parasite survival and virulence. Does not require other inorganic ions such as sodium, chloride, potassium or calcium. In Toxoplasma gondii (strain ATCC 50611 / Me49), this protein is Arginine transporter 1.